A 254-amino-acid chain; its full sequence is Hydroxyacylglutathione hydrolase (254 aa).

Positions 54, 56, 58, 59, 111, 130, and 168 each coordinate Zn(2+).

It belongs to the metallo-beta-lactamase superfamily. Glyoxalase II family. In terms of assembly, monomer. The cofactor is Zn(2+).

The enzyme catalyses an S-(2-hydroxyacyl)glutathione + H2O = a 2-hydroxy carboxylate + glutathione + H(+). It functions in the pathway secondary metabolite metabolism; methylglyoxal degradation; (R)-lactate from methylglyoxal: step 2/2. Thiolesterase that catalyzes the hydrolysis of S-D-lactoyl-glutathione to form glutathione and D-lactic acid. The polypeptide is Hydroxyacylglutathione hydrolase (Legionella pneumophila (strain Paris)).